Here is a 247-residue protein sequence, read N- to C-terminus: DNA polymerase sliding clamp 1 (247 aa).

The protein belongs to the PCNA family. As to quaternary structure, homotrimer. The subunits circularize to form a toroid; DNA passes through its center. Replication factor C (RFC) is required to load the toroid on the DNA.

Sliding clamp subunit that acts as a moving platform for DNA processing. Responsible for tethering the catalytic subunit of DNA polymerase and other proteins to DNA during high-speed replication. The sequence is that of DNA polymerase sliding clamp 1 from Sulfolobus acidocaldarius (strain ATCC 33909 / DSM 639 / JCM 8929 / NBRC 15157 / NCIMB 11770).